The sequence spans 601 residues: MSKPAFDYRNVLQNLPTLPGVYRMLDAAGKVLYVGKAIDLKRRVSSYFQKNDLSPRIQLMVRQIASIETTVTRSEAEALILENNLIKALAPRYNILFRDDKSYPYLMFSGHAFPQMAYYRGEPKKPNQYFGPYPNGYAVRESIQILQKVFRLRTCEDAVFANRSRPCLLYQIKRCSGPCVDHISKEEYAADVASAVAFLNGRQSELINELTRRMTAAAEAMAFEQAAELRDQIQALARVQEKQFVASNQSQQDCDVVAARVRDGVPCVNLVMIRGGRHLGDKSHFPIGGEADTEQEILEAFIGQHYQHAGVPAALVVNGVVDDALQQFLQERAGRKVYIVGNPIGERRVWLEMAEKNAELAILQRLGSKATQAQRLAQLNEVLELEDAGRFECFDISHTMGEATVASCVVYDKGAMQPTEYRRFNITTAAPGDDYAAMREVLSRRYGKLAEGEGRLPDAVFIDGGKGQVGVALEVLGELGLNLPIVGIAKGEERKPGLETLILPYLEKTLQLRQDHPALHLIQTVRDEAHRFAITGHRARRAKARTSSTLEDIPGIGAKRRQQLLTRFGGLRGVATASVDDLAQVEGISRTLAEKIYNALH.

One can recognise a GIY-YIG domain in the interval 17-95 (TLPGVYRMLD…IKALAPRYNI (79 aa)). A UVR domain is found at 204-239 (SELINELTRRMTAAAEAMAFEQAAELRDQIQALARV).

Belongs to the UvrC family. Interacts with UvrB in an incision complex.

It is found in the cytoplasm. Functionally, the UvrABC repair system catalyzes the recognition and processing of DNA lesions. UvrC both incises the 5' and 3' sides of the lesion. The N-terminal half is responsible for the 3' incision and the C-terminal half is responsible for the 5' incision. The protein is UvrABC system protein C of Chromobacterium violaceum (strain ATCC 12472 / DSM 30191 / JCM 1249 / CCUG 213 / NBRC 12614 / NCIMB 9131 / NCTC 9757 / MK).